A 130-amino-acid polypeptide reads, in one-letter code: DNA-directed RNA polymerase subunit omega (130 aa).

The disordered stretch occupies residues 80-130 (PEPDTVPLIGSAGASVDADDTEVAPERMTEEELLKGLEGLAPPEEQPEEDE). Residues 103 to 114 (APERMTEEELLK) are compositionally biased toward basic and acidic residues.

This sequence belongs to the RNA polymerase subunit omega family. In terms of assembly, the RNAP catalytic core consists of 2 alpha, 1 beta, 1 beta' and 1 omega subunit. When a sigma factor is associated with the core the holoenzyme is formed, which can initiate transcription.

The catalysed reaction is RNA(n) + a ribonucleoside 5'-triphosphate = RNA(n+1) + diphosphate. Functionally, promotes RNA polymerase assembly. Latches the N- and C-terminal regions of the beta' subunit thereby facilitating its interaction with the beta and alpha subunits. The chain is DNA-directed RNA polymerase subunit omega from Rhodopseudomonas palustris (strain BisB18).